Consider the following 121-residue polypeptide: UPF0102 protein VP0448 (121 aa).

Belongs to the UPF0102 family.

This is UPF0102 protein VP0448 from Vibrio parahaemolyticus serotype O3:K6 (strain RIMD 2210633).